The sequence spans 248 residues: Granulin (248 aa).

The protein belongs to the polyhedrin family.

Its function is as follows. Component of the virus occlusion bodies, which are large proteinaceous structures, that protect the virus from the outside environment for extended periods until they are ingested by insect larvae. The chain is Granulin from Cydia pomonella (Codling moth).